The primary structure comprises 108 residues: Cyclin-dependent protein kinase inhibitor SMR13 (108 aa).

Probable cyclin-dependent protein kinase (CDK) inhibitor that functions as a repressor of mitosis in the endoreduplication cell cycle. The sequence is that of Cyclin-dependent protein kinase inhibitor SMR13 from Arabidopsis thaliana (Mouse-ear cress).